A 297-amino-acid polypeptide reads, in one-letter code: Acetaldehyde dehydrogenase (297 aa).

Position 15–18 (Ser-15–Ile-18) interacts with NAD(+). Cys-130 acts as the Acyl-thioester intermediate in catalysis. Residues Ser-162–Asn-170 and Asn-272 each bind NAD(+).

It belongs to the acetaldehyde dehydrogenase family.

It carries out the reaction acetaldehyde + NAD(+) + CoA = acetyl-CoA + NADH + H(+). This chain is Acetaldehyde dehydrogenase, found in Burkholderia pseudomallei (strain 1106a).